The chain runs to 131 residues: Putative pre-16S rRNA nuclease (131 aa).

The protein belongs to the YqgF nuclease family.

It is found in the cytoplasm. In terms of biological role, could be a nuclease involved in processing of the 5'-end of pre-16S rRNA. The protein is Putative pre-16S rRNA nuclease of Bordetella avium (strain 197N).